Consider the following 124-residue polypeptide: MARIAGVDIPKQKRGVIALTYIFGIGRSRAQEILAQAKVDESKKVSDWDDDEIGKIREAVGQFTIEGELRTEVQISIKRLMDIGCYRGIRHRAGLPLRGQRTKNNSRTRKGRRKTVANKKKATK.

Positions 94-124 are disordered; sequence GLPLRGQRTKNNSRTRKGRRKTVANKKKATK. Residues 100-124 show a composition bias toward basic residues; it reads QRTKNNSRTRKGRRKTVANKKKATK.

Belongs to the universal ribosomal protein uS13 family. As to quaternary structure, part of the 30S ribosomal subunit. Forms a loose heterodimer with protein S19. Forms two bridges to the 50S subunit in the 70S ribosome.

Functionally, located at the top of the head of the 30S subunit, it contacts several helices of the 16S rRNA. In the 70S ribosome it contacts the 23S rRNA (bridge B1a) and protein L5 of the 50S subunit (bridge B1b), connecting the 2 subunits; these bridges are implicated in subunit movement. Contacts the tRNAs in the A and P-sites. This chain is Small ribosomal subunit protein uS13, found in Christiangramia forsetii (strain DSM 17595 / CGMCC 1.15422 / KT0803) (Gramella forsetii).